Reading from the N-terminus, the 72-residue chain is Translation initiation factor IF-1 (72 aa).

In terms of domain architecture, S1-like spans Met-1–Arg-72.

This sequence belongs to the IF-1 family. Component of the 30S ribosomal translation pre-initiation complex which assembles on the 30S ribosome in the order IF-2 and IF-3, IF-1 and N-formylmethionyl-tRNA(fMet); mRNA recruitment can occur at any time during PIC assembly.

The protein localises to the cytoplasm. One of the essential components for the initiation of protein synthesis. Stabilizes the binding of IF-2 and IF-3 on the 30S subunit to which N-formylmethionyl-tRNA(fMet) subsequently binds. Helps modulate mRNA selection, yielding the 30S pre-initiation complex (PIC). Upon addition of the 50S ribosomal subunit IF-1, IF-2 and IF-3 are released leaving the mature 70S translation initiation complex. This chain is Translation initiation factor IF-1, found in Halorhodospira halophila (strain DSM 244 / SL1) (Ectothiorhodospira halophila (strain DSM 244 / SL1)).